The sequence spans 764 residues: 5-methyltetrahydropteroyltriglutamate--homocysteine methyltransferase (764 aa).

Residues 16 to 19 (RELK) and Lys115 contribute to the 5-methyltetrahydropteroyltri-L-glutamate site. L-homocysteine contacts are provided by residues 435 to 437 (IGS) and Glu488. L-methionine contacts are provided by residues 435 to 437 (IGS) and Glu488. 5-methyltetrahydropteroyltri-L-glutamate contacts are provided by residues 519-520 (RC) and Trp565. Asp603 provides a ligand contact to L-homocysteine. Asp603 contacts L-methionine. Glu609 is a binding site for 5-methyltetrahydropteroyltri-L-glutamate. The Zn(2+) site is built by His645, Cys647, and Glu669. His698 acts as the Proton donor in catalysis. Cys730 contributes to the Zn(2+) binding site.

The protein belongs to the vitamin-B12 independent methionine synthase family. The cofactor is Zn(2+).

It carries out the reaction 5-methyltetrahydropteroyltri-L-glutamate + L-homocysteine = tetrahydropteroyltri-L-glutamate + L-methionine. It functions in the pathway amino-acid biosynthesis; L-methionine biosynthesis via de novo pathway; L-methionine from L-homocysteine (MetE route): step 1/1. In terms of biological role, catalyzes the transfer of a methyl group from 5-methyltetrahydrofolate to homocysteine resulting in methionine formation. The chain is 5-methyltetrahydropteroyltriglutamate--homocysteine methyltransferase from Burkholderia pseudomallei (strain 668).